The chain runs to 616 residues: Chaperone protein HscA (616 aa).

This sequence belongs to the heat shock protein 70 family.

Functionally, chaperone involved in the maturation of iron-sulfur cluster-containing proteins. Has a low intrinsic ATPase activity which is markedly stimulated by HscB. Involved in the maturation of IscU. The chain is Chaperone protein HscA from Salmonella heidelberg (strain SL476).